Reading from the N-terminus, the 220-residue chain is Deoxyribose-phosphate aldolase (220 aa).

The Proton donor/acceptor role is filled by Asp-89. The Schiff-base intermediate with acetaldehyde role is filled by Lys-151. The active-site Proton donor/acceptor is Lys-180.

The protein belongs to the DeoC/FbaB aldolase family. DeoC type 1 subfamily.

The protein localises to the cytoplasm. The catalysed reaction is 2-deoxy-D-ribose 5-phosphate = D-glyceraldehyde 3-phosphate + acetaldehyde. It participates in carbohydrate degradation; 2-deoxy-D-ribose 1-phosphate degradation; D-glyceraldehyde 3-phosphate and acetaldehyde from 2-deoxy-alpha-D-ribose 1-phosphate: step 2/2. Its function is as follows. Catalyzes a reversible aldol reaction between acetaldehyde and D-glyceraldehyde 3-phosphate to generate 2-deoxy-D-ribose 5-phosphate. In Deinococcus radiodurans (strain ATCC 13939 / DSM 20539 / JCM 16871 / CCUG 27074 / LMG 4051 / NBRC 15346 / NCIMB 9279 / VKM B-1422 / R1), this protein is Deoxyribose-phosphate aldolase.